The chain runs to 795 residues: MTSGATRYRLSCSLRGHELDVRGLVCCAYPPGAFVSVSRDRTTRLWAPDSPNRSFTEMHCMSGHSNFVSCVCIIPSSDIYPHGLIATGGNDHNICIFSLDSPMPLYILKGHKNTVCSLSSGKFGTLLSGSWDTTAKVWLNDKCMMTLQGHTAAVWAVKILPEQGLMLTGSADKTVKLWKAGRCERTFSGHEDCVRGLAILSETEFLSCANDASIRRWQITGECLEVYYGHTNYIYSISVFPNCRDFVTTAEDRSLRIWKHGECAQTIRLPAQSIWCCCVLDNGDIVVGASDGIIRVFTESEDRTASAEEIKAFEKELSHATIDSKTGDLGDINAEQLPGREHLNEPGTREGQTRLIRDGEKVEAYQWSVSEGRWIKIGDVVGSSGANQQTSGKVLYEGKEFDYVFSIDVNEGGPSYKLPYNTSDDPWLTAYNFLQKNDLNPMFLDQVAKFIIDNTKGQMLGLGNPSFSDPFTGGGRYVPGSSGSSNTLPTADPFTGAGRYVPGSASMGTTMAGVDPFTGNSAYRSAASKTMNIYFPKKEAVTFDQANPTQILGKLKELNGTAPEEKKLTEDDLILLEKILSLICNSSSEKPTVQQLQILWKAINCPEDIVFPALDILRLSIKHPSVNENFCNEKEGAQFSSHLINLLNPKGKPANQLLALRTFCNCFVGQAGQKLMMSQRESLMSHAIELKSGSNKNIHIALATLALNYSVCFHKDHNIEGKAQCLSLISTILEVVQDLEATFRLLVALGTLISDDSNAVQLAKSLGVDSQIKKYSSVSEPAKVSECCRFILNLL.

7 WD repeats span residues 17–56 (HELD…RSFT), 63–107 (GHSN…PLYI), 110–148 (GHKN…MTLQ), 149–188 (GHTA…RTFS), 190–227 (HEDC…LEVY), 229–268 (GHTN…QTIR), and 270–307 (PAQS…TASA). Ser50 bears the Phosphoserine mark. Residues 366 to 465 (QWSVSEGRWI…KGQMLGLGNP (100 aa)) enclose the PFU domain. Residue Lys529 is modified to N6-acetyllysine. Residues 533 to 794 (IYFPKKEAVT…SECCRFILNL (262 aa)) form the PUL domain. 6 ARM repeats span residues 546–588 (ANPT…NSSS), 589–620 (EKPT…LRLS), 621–669 (IKHP…CFVG), 670–715 (QAGQ…CFHK), 716–755 (DHNI…LISD), and 756–795 (DSNA…LNLL).

The protein belongs to the WD repeat PLAP family. Interacts with ubiquitin. Interacts with UBXN6, VCP and YOD1; may form a complex involved in macroautophagy.

Its subcellular location is the nucleus. The protein resides in the cytoplasm. It localises to the synapse. Functionally, plays a role in protein ubiquitination, sorting and degradation through its association with VCP. Involved in ubiquitin-mediated membrane proteins trafficking to late endosomes in an ESCRT-dependent manner, and hence plays a role in synaptic vesicle recycling. May play a role in macroautophagy, regulating for instance the clearance of damaged lysosomes. Plays a role in cerebellar Purkinje cell development. Positively regulates cytosolic and calcium-independent phospholipase A2 activities in a tumor necrosis factor alpha (TNF-alpha)- or lipopolysaccharide (LPS)-dependent manner, and hence prostaglandin E2 biosynthesis. The chain is Phospholipase A-2-activating protein (PLAA) from Homo sapiens (Human).